The primary structure comprises 379 residues: Cytochrome b (379 aa).

Transmembrane regions (helical) follow at residues 33-53 (FGSLLGACLIIQVITGLFLAM), 77-98 (WMIRYLHANGASMFFLCLFIHV), 113-133 (WNVGIILLFSVMATAFMGYVL), and 178-198 (FFALHFILPFIISAWVMIHLL). Histidine 83 and histidine 97 together coordinate heme b. Residues histidine 182 and histidine 196 each contribute to the heme b site. Histidine 201 is an a ubiquinone binding site. 4 helical membrane passes run 226–246 (TKDFLGLLLLILLLMTLALFY), 288–308 (LGGVVALILSILILMIIPFLQ), 320–340 (LSQFLFWILVADLLTLTWIGG), and 347–367 (FISIGQTASMLYFSLMIFIMP).

It belongs to the cytochrome b family. The cytochrome bc1 complex contains 11 subunits: 3 respiratory subunits (MT-CYB, CYC1 and UQCRFS1), 2 core proteins (UQCRC1 and UQCRC2) and 6 low-molecular weight proteins (UQCRH/QCR6, UQCRB/QCR7, UQCRQ/QCR8, UQCR10/QCR9, UQCR11/QCR10 and a cleavage product of UQCRFS1). This cytochrome bc1 complex then forms a dimer. The cofactor is heme b.

Its subcellular location is the mitochondrion inner membrane. In terms of biological role, component of the ubiquinol-cytochrome c reductase complex (complex III or cytochrome b-c1 complex) that is part of the mitochondrial respiratory chain. The b-c1 complex mediates electron transfer from ubiquinol to cytochrome c. Contributes to the generation of a proton gradient across the mitochondrial membrane that is then used for ATP synthesis. The chain is Cytochrome b (MT-CYB) from Lepilemur septentrionalis (Northern sportive lemur).